Reading from the N-terminus, the 580-residue chain is Netrin-3 (580 aa).

Residues 1 to 27 (MPGWPWGLLLTAGTLFAALSPGPPAPA) form the signal peptide. The region spanning 36-254 (APRGCVPGLV…AATDLQVGGR (219 aa)) is the Laminin N-terminal domain. The disordered stretch occupies residues 62–83 (PATRACDASDPRRAHSPALLTS). 15 cysteine pairs are disulfide-bonded: cysteine 92–cysteine 125, cysteine 255–cysteine 264, cysteine 257–cysteine 274, cysteine 276–cysteine 285, cysteine 288–cysteine 308, cysteine 311–cysteine 320, cysteine 313–cysteine 338, cysteine 341–cysteine 350, cysteine 353–cysteine 371, cysteine 374–cysteine 386, cysteine 376–cysteine 393, cysteine 395–cysteine 404, cysteine 407–cysteine 421, cysteine 441–cysteine 514, and cysteine 460–cysteine 577. Residue asparagine 104 is glycosylated (N-linked (GlcNAc...) asparagine). Laminin EGF-like domains lie at 255–308 (CKCN…SHAC), 311–371 (CSCN…RRAC), and 374–421 (CDCH…VAPC). Asparagine 387 is a glycosylation site (N-linked (GlcNAc...) asparagine). Residues 441–577 (CDSHCKPARG…LQRRERRGRC (137 aa)) enclose the NTR domain. Positions 500-502 (RGS) match the Cell attachment site; atypical motif.

Spinal cord.

The protein localises to the secreted. Its subcellular location is the extracellular space. It localises to the extracellular matrix. Functionally, netrins control guidance of CNS commissural axons and peripheral motor axons. The polypeptide is Netrin-3 (NTN3) (Homo sapiens (Human)).